A 499-amino-acid polypeptide reads, in one-letter code: Glycerol kinase (499 aa).

Thr13 serves as a coordination point for ADP. 3 residues coordinate ATP: Thr13, Thr14, and Ser15. Thr13 lines the sn-glycerol 3-phosphate pocket. ADP is bound at residue Arg17. Sn-glycerol 3-phosphate is bound by residues Arg83, Glu84, Tyr135, and Asp245. Glycerol is bound by residues Arg83, Glu84, Tyr135, Asp245, and Gln246. The ADP site is built by Thr267 and Gly310. Positions 267, 310, 314, and 411 each coordinate ATP. ADP-binding residues include Gly411 and Asn415.

Belongs to the FGGY kinase family.

The catalysed reaction is glycerol + ATP = sn-glycerol 3-phosphate + ADP + H(+). It functions in the pathway polyol metabolism; glycerol degradation via glycerol kinase pathway; sn-glycerol 3-phosphate from glycerol: step 1/1. With respect to regulation, inhibited by fructose 1,6-bisphosphate (FBP). Key enzyme in the regulation of glycerol uptake and metabolism. Catalyzes the phosphorylation of glycerol to yield sn-glycerol 3-phosphate. In Xanthomonas euvesicatoria pv. vesicatoria (strain 85-10) (Xanthomonas campestris pv. vesicatoria), this protein is Glycerol kinase.